Here is a 459-residue protein sequence, read N- to C-terminus: ATP synthase subunit beta (459 aa).

148–155 is an ATP binding site; the sequence is GGAGVGKT.

The protein belongs to the ATPase alpha/beta chains family. In terms of assembly, F-type ATPases have 2 components, CF(1) - the catalytic core - and CF(0) - the membrane proton channel. CF(1) has five subunits: alpha(3), beta(3), gamma(1), delta(1), epsilon(1). CF(0) has three main subunits: a(1), b(2) and c(9-12). The alpha and beta chains form an alternating ring which encloses part of the gamma chain. CF(1) is attached to CF(0) by a central stalk formed by the gamma and epsilon chains, while a peripheral stalk is formed by the delta and b chains.

It localises to the cell inner membrane. The enzyme catalyses ATP + H2O + 4 H(+)(in) = ADP + phosphate + 5 H(+)(out). Its function is as follows. Produces ATP from ADP in the presence of a proton gradient across the membrane. The catalytic sites are hosted primarily by the beta subunits. This Ruthia magnifica subsp. Calyptogena magnifica protein is ATP synthase subunit beta.